A 571-amino-acid polypeptide reads, in one-letter code: Probable pectinesterase/pectinesterase inhibitor 58 (571 aa).

Positions 1–28 (MGVDGELKKKKCIIAGVITALLVLMVVA) are cleaved as a signal peptide. N-linked (GlcNAc...) asparagine glycans are attached at residues asparagine 36, asparagine 91, asparagine 207, and asparagine 216. Positions 49-204 (KTATTAVEAV…RELTSNGLAM (156 aa)) are pectinesterase inhibitor 58. Residues 259–556 (NVVVAHDGSG…FTPARFLRGN (298 aa)) form a pectinesterase 58 region. Residue threonine 335 participates in substrate binding. Asparagine 347 carries N-linked (GlcNAc...) asparagine glycosylation. Residue glutamine 365 coordinates substrate. Aspartate 388 functions as the Proton donor; for pectinesterase activity in the catalytic mechanism. The cysteines at positions 402 and 422 are disulfide-linked. Aspartate 409 (nucleophile; for pectinesterase activity) is an active-site residue. Residues arginine 477 and tryptophan 479 each coordinate substrate.

The protein in the N-terminal section; belongs to the PMEI family. In the C-terminal section; belongs to the pectinesterase family. In terms of tissue distribution, expressed in siliques, but not in flower buds.

It localises to the secreted. The protein resides in the cell wall. It catalyses the reaction [(1-&gt;4)-alpha-D-galacturonosyl methyl ester](n) + n H2O = [(1-&gt;4)-alpha-D-galacturonosyl](n) + n methanol + n H(+). It functions in the pathway glycan metabolism; pectin degradation; 2-dehydro-3-deoxy-D-gluconate from pectin: step 1/5. In terms of biological role, acts in the modification of cell walls via demethylesterification of cell wall pectin. The chain is Probable pectinesterase/pectinesterase inhibitor 58 (PME58) from Arabidopsis thaliana (Mouse-ear cress).